Consider the following 1252-residue polypeptide: MNRPLSAEAEEELEWQVASRRRKAWAKCRSSWQASETEDLSTETTTQDEDEDDEEDLPGTKLPAPAGRGNVPNEKIAIWLKDCRTPLGASLDEQSSGTPKGVLVRNGGSFEDDLSLGAEANHLHEPDAQVENCNNILAKERRLQFHQKGRSMNSTGSGKSSGTVSSVSELLELYEEDPEEILYNLGFGRDEPDIASKIPSRFFNSSSFARGIDIKVFLSAQMQRMEVENPNYALTSRFRQIEVLTTVANAFSSLYSQVSGTPLQRIGSMSSVTSTKEVADSPPPLTRSNTANRLMKTLSKLNLCVDKTEKGEGGSSPATEKGRTLSISLSEDGGGGKSDPKLQKVVKKKESSSMLATVTEEVSGSSSTVTDSVDADRLSEEADSTISHQEESEESREAHSQEKDPLRKSAVTDPDLGHDGRVSSHCELESSSELKSAQASSSEKEPCAPLTIPSIRNIMTQQKDSFEMEEVQSTEGEAPHVPATCQLSLAKSKRDHLLRTASQHSDSSGFAEDSTDCVSLNHLLVNESLQAMGSSADSCDSETTVTSLGEDHVTPTAQDQPYFNESEEESLAPLQKGRAKVEIVAEKRKADNQDFPQCVTAENAGNNESTKGPCEPGHQITETGEHPPLAATGELPREESVESDVEKGSECEFAQYTTHHILRSLASFEAQGSGMSSEKKTGFPSSVDRVNTALQRAQMKVCSMSGQRVGRSLIKSKDLLKQRYLLAKAGYPLRRSQSLPTTLLSPVRVVSSVNVRLSPGKETRCSPPSFTYKYTPEEEQDLEKQGTEHDGQSLVKSTIFIPPPSVKKEEAPQSEGTRLEECHHGRLAPCPQFAPISQSTCSLHSVHSEWQDRPLCEHMRTLSAHSVPNISGAACSAFSPFGCPYSHRHAAHPYRACSVNPPSAIEMQLRRVLHDIRSSLQNLSQYPMTRGPDLAAAPYSTQNSSVLPLYENTFQELQVVRRSLNLFRTQMMDLELAMLRQQTVVYPHMTEEDRYEVDQLQGLRNSVRMELQDLEMQLEERLLGLDEQLRAVRVPSPFRPSALPGMCGSRSVDNLSCPSPLNVMEPVTELIREQSYLKSELGLGLGDMAYEIPPGESSESVFSQATSESSSVCSSPSHTNRRSRGLPGSKPRARLVARKKIFRASVALTPTAPSRTGSVQTPPDLESSEEAGGAEEASPVVGLASHVEEEPEDLSLMPAAEEMHRNVEQDELQQVIREIKESIVGEIRREIVSGLLAAVSSSKAPGPKQDSH.

The segment at 28 to 70 (CRSSWQASETEDLSTETTTQDEDEDDEEDLPGTKLPAPAGRGN) is disordered. Residues 36 to 57 (ETEDLSTETTTQDEDEDDEEDL) show a composition bias toward acidic residues. T85 carries the post-translational modification Phosphothreonine. Phosphoserine occurs at positions 90, 109, 207, 268, and 328. 3 disordered regions span residues 306-483 (DKTE…HVPA), 552-575 (HVTPTAQDQPYFNESEEESLAPLQ), and 595-636 (FPQC…GELP). Low complexity predominate over residues 357–372 (TVTEEVSGSSSTVTDS). Basic and acidic residues-rich tracts occupy residues 395–407 (SREAHSQEKDPLR) and 415–428 (DLGHDGRVSSHCEL). Over residues 429–441 (ESSSELKSAQASS) the composition is skewed to low complexity. S465 carries the phosphoserine modification. Phosphoserine occurs at positions 643, 667, 736, 738, 745, 758, and 766. K807 participates in a covalent cross-link: Glycyl lysine isopeptide (Lys-Gly) (interchain with G-Cter in SUMO2). Phosphoserine occurs at positions 866 and 898. Residues 955 to 1031 (QELQVVRRSL…LLGLDEQLRA (77 aa)) are a coiled coil. Phosphoserine occurs at positions 1036, 1051, 1056, 1059, and 1114. Disordered regions lie at residues 1095–1131 (GESSESVFSQATSESSSVCSSPSHTNRRSRGLPGSKP) and 1147–1180 (ALTPTAPSRTGSVQTPPDLESSEEAGGAEEASPV). Residues 1103 to 1117 (SQATSESSSVCSSPS) are compositionally biased toward low complexity. The residue at position 1149 (T1149) is a Phosphothreonine. Positions 1151-1161 (TAPSRTGSVQT) are enriched in polar residues. A Phosphoserine modification is found at S1154. T1161 is modified (phosphothreonine).

The protein localises to the cytoplasm. The chain is Protein ITPRID2 (Itprid2) from Mus musculus (Mouse).